Here is a 423-residue protein sequence, read N- to C-terminus: Acaloleptin A (423 aa).

A signal peptide spans 1 to 17 (MITKISLILFAVLLVSG). A propeptide spanning residues 18-26 (LEEEERWKR) is cleaved from the precursor. 4 disordered regions span residues 28-58 (LQPGAPNVNNNDQPWQVSPHISRDDSGNTKT), 108-128 (INNKDQPWQVSPHISRDDNGN), 180-203 (NVNNKDQPWQVSPHISRDDSGNTR), and 355-385 (SDDEDEEEEEDQPWQLNPNIARGDDGNTRAD). Residues 34–43 (NVNNNDQPWQ) are compositionally biased toward polar residues. Polar residues predominate over residues 180-189 (NVNNKDQPWQ). Positions 357–366 (DEDEEEEEDQ) are enriched in acidic residues. Residues 376–385 (RGDDGNTRAD) are compositionally biased toward basic and acidic residues.

It belongs to the coleoptericin family. In terms of tissue distribution, hemolymph (at protein level). Larval fat body.

Its subcellular location is the secreted. In terms of biological role, acaloleptins A1-A4 show antibacterial activity against Gram-negative bacteria but not against Gram-positive bacteria. Acaloleptin A5 shows antibacterial activity against Gram-positive bacteria but not against Gram-negative bacteria, and may also have antifungal activity. The protein is Acaloleptin A of Acalolepta luxuriosa (Udo longhorn beetle).